Here is a 617-residue protein sequence, read N- to C-terminus: Dihydroxy-acid dehydratase (617 aa).

D81 lines the Mg(2+) pocket. Residue C122 coordinates [2Fe-2S] cluster. Residues D123 and K124 each contribute to the Mg(2+) site. K124 bears the N6-carboxylysine mark. C195 contacts [2Fe-2S] cluster. E492 contacts Mg(2+). S518 acts as the Proton acceptor in catalysis.

The protein belongs to the IlvD/Edd family. Homodimer. [2Fe-2S] cluster serves as cofactor. The cofactor is Mg(2+).

The catalysed reaction is (2R)-2,3-dihydroxy-3-methylbutanoate = 3-methyl-2-oxobutanoate + H2O. The enzyme catalyses (2R,3R)-2,3-dihydroxy-3-methylpentanoate = (S)-3-methyl-2-oxopentanoate + H2O. It functions in the pathway amino-acid biosynthesis; L-isoleucine biosynthesis; L-isoleucine from 2-oxobutanoate: step 3/4. The protein operates within amino-acid biosynthesis; L-valine biosynthesis; L-valine from pyruvate: step 3/4. In terms of biological role, functions in the biosynthesis of branched-chain amino acids. Catalyzes the dehydration of (2R,3R)-2,3-dihydroxy-3-methylpentanoate (2,3-dihydroxy-3-methylvalerate) into 2-oxo-3-methylpentanoate (2-oxo-3-methylvalerate) and of (2R)-2,3-dihydroxy-3-methylbutanoate (2,3-dihydroxyisovalerate) into 2-oxo-3-methylbutanoate (2-oxoisovalerate), the penultimate precursor to L-isoleucine and L-valine, respectively. This Xanthobacter autotrophicus (strain ATCC BAA-1158 / Py2) protein is Dihydroxy-acid dehydratase.